The chain runs to 130 residues: Small ribosomal subunit protein uS9 (130 aa).

A disordered region spans residues 108-130; it reads SREVERKKVGLRKARKRPQYSKR. A compositionally biased stretch (basic residues) spans 116–130; sequence VGLRKARKRPQYSKR.

This sequence belongs to the universal ribosomal protein uS9 family.

In Cellvibrio japonicus (strain Ueda107) (Pseudomonas fluorescens subsp. cellulosa), this protein is Small ribosomal subunit protein uS9.